The following is a 339-amino-acid chain: Diguanylate cyclase VdcA (339 aa).

The GGDEF domain maps to 206 to 339 (QQVSLIMLDI…NLGRNRVMPL (134 aa)). Asp-214 lines the Mg(2+) pocket. Positions 222 and 231 each coordinate substrate. Glu-257 contributes to the Mg(2+) binding site. Residue Glu-257 is the Proton acceptor of the active site.

The cofactor is Mg(2+).

The catalysed reaction is 2 GTP = 3',3'-c-di-GMP + 2 diphosphate. It functions in the pathway purine metabolism; 3',5'-cyclic di-GMP biosynthesis. Functionally, diguanylate cyclase (DGC) that catalyzes the synthesis of cyclic diguanylate (c-di-GMP) via the condensation of 2 GTP molecules. Is involved in the modulation of intracellular c-di-GMP levels. Cyclic-di-GMP is a second messenger which positively regulates biofilm formation and negatively regulates virulence in V.cholerae, and is proposed to play an important role in the transition from persistence in the environment to survival in the host. Overexpression of vdcA results in increased biofilm formation, and reduced motility and virulence. The chain is Diguanylate cyclase VdcA (vdcA) from Vibrio cholerae serotype O1 (strain ATCC 39315 / El Tor Inaba N16961).